A 636-amino-acid chain; its full sequence is DNA-dependent metalloprotease SPRTN (636 aa).

A disordered region spans residues 19-42 (QETPAAGWPDEDCPSSKRRRVDPS). One can recognise a SprT-like domain in the interval 76–183 (RAMFLQFNDK…ASGTNITIYH (108 aa)). A Zn(2+)-binding site is contributed by histidine 141. The active site involves glutamate 142. The Zn(2+) site is built by histidine 145 and histidine 160. 2 disordered regions span residues 238-382 (TYTK…GKQR) and 398-430 (RGAS…PSGK). The span at 241–268 (KIKEPENYGKTGKSDKQRDKMPATEMPK) shows a compositional bias: basic and acidic residues. Over residues 272-281 (PPSSTSSSGS) the composition is skewed to low complexity. Residues 290 to 298 (FSGRGFVLG) carry the SHP-box motif. Positions 302-311 (QIPTNKQIQS) are enriched in polar residues. Residues 313–327 (PKAPPEPLHSPPDSP) are compositionally biased toward pro residues. Positions 341 to 374 (RLSSGTSNIPRKRSVGNTNAFINVNGSPVRISNG) are enriched in polar residues. Over residues 399 to 416 (GASAVGSSKSSTDASTAD) the composition is skewed to low complexity. Residues 451-458 (ESNISKYF) carry the PIP-box motif. The segment at 473 to 608 (TFGSPQKSAI…VRDQQANNPP (136 aa)) is disordered. Composition is skewed to polar residues over residues 492–523 (FGSN…SGSS) and 545–554 (SPRTSGTTPS). A Nuclear localization signal motif is present at residues 535 to 566 (SNFPSPRNIGSPRTSGTTPSGAKKRSWEEHNS). Basic and acidic residues-rich tracts occupy residues 559–570 (RSWEEHNSERVF) and 584–593 (TDKKREEVRS). The UBZ4-type zinc-finger motif lies at 612–636 (TVHCPVCHIRLPESTINDHLDSCLL). Zn(2+) contacts are provided by cysteine 615, cysteine 618, histidine 630, and cysteine 634.

It belongs to the Spartan family. As to quaternary structure, homodimer. It depends on Zn(2+) as a cofactor. Autocatalytically cleaved in response to double-stranded DNA-binding: autocatalytic cleavage takes place in trans and leads to inactivation.

The protein localises to the nucleus. It localises to the chromosome. Its activity is regulated as follows. DNA-binding activates the protease activity: single-stranded DNA-binding specifically activates ability to cleave covalent DNA-protein cross-links (DPCs). In contrast, double-stranded DNA-binding specifically activates autocatalytic cleavage, and subsequent inactivation. In terms of biological role, DNA-dependent metalloendopeptidase that mediates the proteolytic cleavage of covalent DNA-protein cross-links (DPCs) during DNA synthesis, thereby playing a key role in maintaining genomic integrity. DPCs are highly toxic DNA lesions that interfere with essential chromatin transactions, such as replication and transcription, and which are induced by reactive agents, such as UV light or formaldehyde. Associates with the DNA replication machinery and specifically removes DPCs during DNA synthesis. Catalyzes proteolytic cleavage of the hmces DNA-protein cross-link following unfolding by the brip1/fancj helicase. Acts as a pleiotropic protease for DNA-binding proteins cross-linked with DNA, such as top1, top2a, histones H3 and H4. Mediates degradation of DPCs that are not ubiquitinated, while it is not able to degrade ubiquitinated DPCs. SPRTN activation requires polymerase collision with DPCs followed by helicase bypass of DPCs. May also act as a 'reader' of ubiquitinated pcna: facilitates chromatin association of rad18 and is required for efficient pcna monoubiquitination, promoting a feed-forward loop to enhance pcna ubiquitination and translesion DNA synthesis. Acts as a regulator of translesion DNA synthesis by recruiting vcp/p97 to sites of DNA damage. This is DNA-dependent metalloprotease SPRTN from Danio rerio (Zebrafish).